Reading from the N-terminus, the 378-residue chain is MRGKRVVLPDKDHQACGLFGVIDRSGRRFSGEMAINAMINMKVRGNGLGGGFAAYGIYPEYKDYYALHVMFQDWDMEAKHRVDEFLDANFDVVYAEEIPVNPEANVASPPLFWRYFVSPNKKGDEKKLSDDDYVVKKVMEINTKINNAYVVSSGKDMGVFKGVGFPEDIAEYFMLAEEYKGYMWTAHSRFPTNTPGWWGGAHPFCILDWTVVHNGEISSYGTNKRYLEMFGYYCTLLTDTEVMAYAVDLLMRKQGLPIEIVSKIFAPPMWDHIDIMDEKKKKFYTALRMNYGPLLINGPWTIVVARHGEMFGITDRIRLRPITSGEKGDLLFVSSEESAIRAVCPDLDRVYTPMGGEPVIGRLKSREKELAKQLSEVE.

Cys16 (for GATase activity) is an active-site residue. Positions 16 to 378 (CGLFGVIDRS…ELAKQLSEVE (363 aa)) constitute a Glutamine amidotransferase type-2 domain.

This is an uncharacterized protein from Archaeoglobus fulgidus (strain ATCC 49558 / DSM 4304 / JCM 9628 / NBRC 100126 / VC-16).